Reading from the N-terminus, the 338-residue chain is Protein FosB (338 aa).

Disordered regions lie at residues 1–54 (MFQA…PGSF) and 80–162 (AQSQ…RVRR). Polar residues predominate over residues 13–31 (SRCSSSPSAESQYLSSVDS). S27 bears the Phosphoserine mark. Residues 113-124 (SSGGASGSGGPS) are compositionally biased toward gly residues. Residues 125 to 137 (TSGTTSGPGPARP) show a composition bias toward low complexity. Positions 155–218 (EEKRRVRRER…ERLEFVLVAH (64 aa)) constitute a bZIP domain. The segment at 157–182 (KRRVRRERNKLAAAKCRNRRRELTDR) is basic motif. A leucine-zipper region spans residues 183 to 211 (LQAETDQLEEEKAELESEIAELQKEKERL). Disordered stretches follow at residues 222-271 (CKIP…TSQD) and 315-338 (AGTQ…LLAL). Pro residues predominate over residues 256–265 (LPPPPAPPLP). Positions 318 to 338 (QRPSGSDQPTDPLNSPSLLAL) are enriched in polar residues.

It belongs to the bZIP family. Fos subfamily. Heterodimer; binds to DNA as heterodimer. Component of an AP-1 transcription factor complex; composed of FOS-JUN heterodimers. As part of the AP-1 transcription factor complex, forms heterodimers with JUN, JUNB or JUND, thereby binding to the AP-1 consensus sequence and stimulating transcription. Interacts with the BAF multiprotein chromatin-remodeling complex subunits SMARCB1 and SMARCD1. Interacts with ARID1A and JUN. Phosphorylated.

Its subcellular location is the nucleus. Its function is as follows. Heterodimerizes with proteins of the JUN family to form an AP-1 transcription factor complex, thereby enhancing their DNA binding activity to an AP-1 consensus sequence 5'-TGA[GC]TCA-3' and enhancing their transcriptional activity. Exhibits transactivation activity in vitro. As part of the AP-1 complex, facilitates enhancer selection together with cell-type-specific transcription factors by collaboratively binding to nucleosomal enhancers and recruiting the SWI/SNF (BAF) chromatin remodeling complex to establish accessible chromatin. Together with JUN, plays a role in activation-induced cell death of T cells by binding to the AP-1 promoter site of FASLG/CD95L, and inducing its transcription in response to activation of the TCR/CD3 signaling pathway. Involved in the display of nurturing behavior towards newborns. May play a role in neurogenesis in the hippocampus and in learning and memory-related tasks by regulating the expression of various genes involved in neurogenesis, depression and epilepsy. Implicated in behavioral responses related to morphine reward and spatial memory. In Canis lupus familiaris (Dog), this protein is Protein FosB (FOSB).